The chain runs to 310 residues: Transcriptional regulator NRG1 (310 aa).

The segment at 85–131 (YYMGPPAQHRLPTPPPYPMSSPTTATAATPLSQQSPHLQPQQTLQQP) is disordered. Residues 104 to 131 (SSPTTATAATPLSQQSPHLQPQQTLQQP) show a composition bias toward low complexity. 2 consecutive C2H2-type zinc fingers follow at residues 228–250 (HVCKVCSRSFTTSGHLARHNRIH) and 256–280 (HQCPWPTCEARFARQDNCNQHYKTH).

It is found in the nucleus. Its function is as follows. Transcriptional repressor that binds NRG1 response elements (NRE) of target promoters. Involved in regulation of chlamydospore formation, hyphal growth, virulence, and stress response. Plays a key role in regulating true hyphal growth, but does not regulate pseudohyphal growth in the same fashion. Directs transcriptional repression of a subset of filament-specific genes such as HWP1, HYR1, ALS8, HWP1, or ECE1; via the TUP1 pathway. Functions with UME6 in a negative feedback loop to control the level and duration of filament-specific gene expression in response to inducing conditions. Plays a key role in biofilm formation and dispersion. Also plays the role of a negative regulator of virulence in mice models. Required for the expression of the cell wall genes RBR1. This chain is Transcriptional regulator NRG1 (NRG1), found in Candida albicans (strain SC5314 / ATCC MYA-2876) (Yeast).